Consider the following 114-residue polypeptide: Large ribosomal subunit protein bL17 (114 aa).

Belongs to the bacterial ribosomal protein bL17 family. As to quaternary structure, part of the 50S ribosomal subunit. Contacts protein L32.

The sequence is that of Large ribosomal subunit protein bL17 from Clostridium acetobutylicum (strain ATCC 824 / DSM 792 / JCM 1419 / IAM 19013 / LMG 5710 / NBRC 13948 / NRRL B-527 / VKM B-1787 / 2291 / W).